The primary structure comprises 132 residues: Small ribosomal subunit protein uS11 (132 aa).

Residues 113–132 form a disordered region; the sequence is VTPIPHDGTRAPGGKRGRRV.

It belongs to the universal ribosomal protein uS11 family. In terms of assembly, part of the 30S ribosomal subunit.

Functionally, located on the platform of the 30S subunit. The sequence is that of Small ribosomal subunit protein uS11 from Methanocella arvoryzae (strain DSM 22066 / NBRC 105507 / MRE50).